The chain runs to 117 residues: Large ribosomal subunit protein uL24 (117 aa).

Residues Met-1–Lys-10 show a composition bias toward basic residues. Positions Met-1–Leu-28 are disordered.

The protein belongs to the universal ribosomal protein uL24 family. As to quaternary structure, part of the 50S ribosomal subunit.

Functionally, one of two assembly initiator proteins, it binds directly to the 5'-end of the 23S rRNA, where it nucleates assembly of the 50S subunit. In terms of biological role, located at the polypeptide exit tunnel on the outside of the subunit. This is Large ribosomal subunit protein uL24 from Methanobrevibacter smithii (strain ATCC 35061 / DSM 861 / OCM 144 / PS).